The sequence spans 277 residues: Ribosomal protein L11 methyltransferase (277 aa).

S-adenosyl-L-methionine-binding residues include Thr130, Gly151, Asp172, and Asn213.

Belongs to the methyltransferase superfamily. PrmA family.

It is found in the cytoplasm. The catalysed reaction is L-lysyl-[protein] + 3 S-adenosyl-L-methionine = N(6),N(6),N(6)-trimethyl-L-lysyl-[protein] + 3 S-adenosyl-L-homocysteine + 3 H(+). Its function is as follows. Methylates ribosomal protein L11. The polypeptide is Ribosomal protein L11 methyltransferase (Campylobacter concisus (strain 13826)).